Reading from the N-terminus, the 240-residue chain is Proteasome subunit beta 1 (240 aa).

Residues 1-46 constitute a propeptide, removed in mature form; by autocatalysis; the sequence is MRDMTPGPDLSGPQAADEFQSDPYAPEVGELPEQSAQDSEKVNKTG. Residues 1 to 48 are disordered; sequence MRDMTPGPDLSGPQAADEFQSDPYAPEVGELPEQSAQDSEKVNKTGTT. T47 acts as the Nucleophile in catalysis.

This sequence belongs to the peptidase T1B family. As to quaternary structure, the 20S proteasome core is composed of 14 alpha and 14 beta subunits that assemble into four stacked heptameric rings, resulting in a barrel-shaped structure. The two inner rings, each composed of seven catalytic beta subunits, are sandwiched by two outer rings, each composed of seven alpha subunits. The catalytic chamber with the active sites is on the inside of the barrel. Has a gated structure, the ends of the cylinder being occluded by the N-termini of the alpha-subunits. Is capped at one or both ends by the proteasome regulatory ATPase, PAN.

Its subcellular location is the cytoplasm. It catalyses the reaction Cleavage of peptide bonds with very broad specificity.. The formation of the proteasomal ATPase PAN-20S proteasome complex, via the docking of the C-termini of PAN into the intersubunit pockets in the alpha-rings, triggers opening of the gate for substrate entry. Interconversion between the open-gate and close-gate conformations leads to a dynamic regulation of the 20S proteasome proteolysis activity. In terms of biological role, component of the proteasome core, a large protease complex with broad specificity involved in protein degradation. In Haloarcula marismortui (strain ATCC 43049 / DSM 3752 / JCM 8966 / VKM B-1809) (Halobacterium marismortui), this protein is Proteasome subunit beta 1.